A 641-amino-acid polypeptide reads, in one-letter code: Sodium-dependent nutrient amino acid transporter 1 (641 aa).

Residues 1-21 (MELKNIEQQPQLQNGNGTATE) show a composition bias toward polar residues. The disordered stretch occupies residues 1 to 37 (MELKNIEQQPQLQNGNGTATENNEKGEQKPTEGGERT). The Cytoplasmic portion of the chain corresponds to 1 to 38 (MELKNIEQQPQLQNGNGTATENNEKGEQKPTEGGERTN). Residues 22–35 (NNEKGEQKPTEGGE) are compositionally biased toward basic and acidic residues. Transmembrane regions (helical) follow at residues 39-59 (WGNGLEFLMSCISVSVGLGNV), 72-92 (GAFLIPYIIVLFLIGKPMYYL), and 125-145 (TVCIISYYSSLLALTLYYLFV). N-linked (GlcNAc...) asparagine glycans are attached at residues Asn-181, Asn-190, and Asn-198. 9 helical membrane-spanning segments follow: residues 229 to 249 (PDWKLTLALLVSWIVTFLVIM), 258 to 278 (AAYFLAIFPYVVLFVLLGRAV), 307 to 327 (AVVQCFFSLAVSCGPIIMFAS), 341 to 361 (IVTTLDTLTSLLGGITIFAIL), 401 to 421 (LFSVLFFFMLFVLGIGSIVAL), 441 to 461 (VALVTSICGFLLGLVYVTPGG), 474 to 494 (TYVVFILAIFELAGIVWIYGL), 516 to 536 (CWSFFTPVMMIIIFIYSMATI), and 552 to 572 (IAGWIVFAIGTAQFPLWGIWY).

Belongs to the sodium:neurotransmitter symporter (SNF) (TC 2.A.22) family.

It is found in the membrane. Functionally, unusual broad substrate spectrum amino acid:sodium cotransporter that promotes absorption of the D isomers of essential amino acids. Neutral amino acids are the preferred substrates, especially methionine and phenylalanine. The sequence is that of Sodium-dependent nutrient amino acid transporter 1 from Drosophila willistoni (Fruit fly).